Reading from the N-terminus, the 89-residue chain is Small ribosomal subunit protein uS15 (89 aa).

Belongs to the universal ribosomal protein uS15 family. As to quaternary structure, part of the 30S ribosomal subunit. Forms a bridge to the 50S subunit in the 70S ribosome, contacting the 23S rRNA.

In terms of biological role, one of the primary rRNA binding proteins, it binds directly to 16S rRNA where it helps nucleate assembly of the platform of the 30S subunit by binding and bridging several RNA helices of the 16S rRNA. Forms an intersubunit bridge (bridge B4) with the 23S rRNA of the 50S subunit in the ribosome. The polypeptide is Small ribosomal subunit protein uS15 (Herminiimonas arsenicoxydans).